The primary structure comprises 89 residues: Small ribosomal subunit protein uS15 (89 aa).

Belongs to the universal ribosomal protein uS15 family. In terms of assembly, part of the 30S ribosomal subunit. Forms a bridge to the 50S subunit in the 70S ribosome, contacting the 23S rRNA.

In terms of biological role, one of the primary rRNA binding proteins, it binds directly to 16S rRNA where it helps nucleate assembly of the platform of the 30S subunit by binding and bridging several RNA helices of the 16S rRNA. Forms an intersubunit bridge (bridge B4) with the 23S rRNA of the 50S subunit in the ribosome. This is Small ribosomal subunit protein uS15 from Geobacillus thermodenitrificans (strain NG80-2).